A 346-amino-acid chain; its full sequence is FMRFamide-related peptides type HF-1 (346 aa).

The first 19 residues, 1–19 (MTSLCLTIAPAVLSLICLS), serve as a signal peptide directing secretion. A propeptide spanning residues 20–45 (SYGWAEDNNGIHTLDDGDNDPFFRHN) is cleaved from the precursor. Residue phenylalanine 51 is modified to Phenylalanine amide. Positions 54–94 (AFVPLWDNADDSLVRKNLLTHWSEFPLSPALSSSDVFSRNS) are excised as a propeptide. At phenylalanine 100 the chain carries Phenylalanine amide. A propeptide spanning residues 103-109 (SYPPYQD) is cleaved from the precursor. Residue phenylalanine 115 is modified to Phenylalanine amide. The propeptide occupies 118–203 (SHQPDIDEYL…EILSNEDDLE (86 aa)). A disordered region spans residues 137–185 (YRKRRSEDGDSKEDGLNRVARSADANQQSKNTQSNKFGKDLQKRETKKE). Over residues 141–152 (RSEDGDSKEDGL) the composition is skewed to basic and acidic residues. Over residues 160–172 (DANQQSKNTQSNK) the composition is skewed to polar residues. Over residues 173–185 (FGKDLQKRETKKE) the composition is skewed to basic and acidic residues. 2 positions are modified to phenylalanine amide: phenylalanine 209 and phenylalanine 216. A propeptide spanning residues 219 to 226 (GDEDESYD) is cleaved from the precursor. Position 232 is a phenylalanine amide (phenylalanine 232). A propeptide spanning residues 235–243 (SLRHDQEFE) is cleaved from the precursor. A phenylalanine amide mark is found at phenylalanine 249 and phenylalanine 256. The propeptide occupies 259–267 (GDEDDAREE). Residue phenylalanine 273 is modified to Phenylalanine amide. Residues 276 to 283 (SSNEDEDI) constitute a propeptide that is removed on maturation. At phenylalanine 290 the chain carries Phenylalanine amide. Positions 293-301 (SGNEDGDVD) are excised as a propeptide. A phenylalanine amide mark is found at phenylalanine 307 and phenylalanine 314. Positions 317-325 (SEKEDGDVD) are excised as a propeptide. A phenylalanine amide mark is found at phenylalanine 331 and phenylalanine 338. Positions 341-346 (GDSETS) are excised as a propeptide.

The protein belongs to the FARP (FMRFamide related peptide) family. As to expression, central nervous system.

Its subcellular location is the secreted. Can function as both cardioregulatory hormones and transmitters and may regulate cardiovascular function. The protein is FMRFamide-related peptides type HF-1 of Cornu aspersum (Brown garden snail).